Reading from the N-terminus, the 1058-residue chain is Carbamoyl phosphate synthase large chain (1058 aa).

Residues methionine 1–glutamate 401 are carboxyphosphate synthetic domain. Residues arginine 129, arginine 169, glycine 175, glycine 176, arginine 208, isoleucine 210, glutamate 215, glycine 241, isoleucine 242, histidine 243, glutamine 284, and glutamate 298 each contribute to the ATP site. In terms of domain architecture, ATP-grasp 1 spans lysine 133–valine 327. Mg(2+) contacts are provided by glutamine 284, glutamate 298, and asparagine 300. Glutamine 284, glutamate 298, and asparagine 300 together coordinate Mn(2+). Residues isoleucine 402–serine 546 are oligomerization domain. The tract at residues valine 547 to asparagine 929 is carbamoyl phosphate synthetic domain. The ATP-grasp 2 domain maps to glutamate 671–leucine 861. 10 residues coordinate ATP: arginine 707, serine 746, isoleucine 748, glutamate 752, glycine 777, valine 778, histidine 779, serine 780, glutamine 820, and glutamate 832. Residues glutamine 820, glutamate 832, and asparagine 834 each coordinate Mg(2+). Positions 820, 832, and 834 each coordinate Mn(2+). Residues serine 930–isoleucine 1058 form the MGS-like domain. An allosteric domain region spans residues serine 930–isoleucine 1058.

It belongs to the CarB family. Composed of two chains; the small (or glutamine) chain promotes the hydrolysis of glutamine to ammonia, which is used by the large (or ammonia) chain to synthesize carbamoyl phosphate. Tetramer of heterodimers (alpha,beta)4. Mg(2+) is required as a cofactor. It depends on Mn(2+) as a cofactor.

It catalyses the reaction hydrogencarbonate + L-glutamine + 2 ATP + H2O = carbamoyl phosphate + L-glutamate + 2 ADP + phosphate + 2 H(+). The enzyme catalyses hydrogencarbonate + NH4(+) + 2 ATP = carbamoyl phosphate + 2 ADP + phosphate + 2 H(+). Its pathway is amino-acid biosynthesis; L-arginine biosynthesis; carbamoyl phosphate from bicarbonate: step 1/1. It participates in pyrimidine metabolism; UMP biosynthesis via de novo pathway; (S)-dihydroorotate from bicarbonate: step 1/3. In terms of biological role, large subunit of the glutamine-dependent carbamoyl phosphate synthetase (CPSase). CPSase catalyzes the formation of carbamoyl phosphate from the ammonia moiety of glutamine, carbonate, and phosphate donated by ATP, constituting the first step of 2 biosynthetic pathways, one leading to arginine and/or urea and the other to pyrimidine nucleotides. The large subunit (synthetase) binds the substrates ammonia (free or transferred from glutamine from the small subunit), hydrogencarbonate and ATP and carries out an ATP-coupled ligase reaction, activating hydrogencarbonate by forming carboxy phosphate which reacts with ammonia to form carbamoyl phosphate. This Streptococcus pyogenes serotype M1 protein is Carbamoyl phosphate synthase large chain.